The following is a 353-amino-acid chain: F-box protein At3g58530 (353 aa).

Residues 8–56 (EEEEETWRREIVTSVMRLVSTRLPQTDLISLLLVSPWLYRTLISYPSIW) form the F-box; degenerate domain.

The polypeptide is F-box protein At3g58530 (Arabidopsis thaliana (Mouse-ear cress)).